The primary structure comprises 709 residues: Putative extracellular sulfatase Sulf-1 homolog (709 aa).

Residues 1 to 27 (MISNLRISNYFIIFYVLFLIIPIKVTS) form the signal peptide. Ca(2+) contacts are provided by aspartate 43, aspartate 44, and cysteine 79. Cysteine 79 functions as the Nucleophile in the catalytic mechanism. The residue at position 79 (cysteine 79) is a 3-oxoalanine (Cys). 3 N-linked (GlcNAc...) asparagine glycosylation sites follow: asparagine 103, asparagine 162, and asparagine 189. Ca(2+) contacts are provided by aspartate 308 and histidine 309. N-linked (GlcNAc...) asparagine glycans are attached at residues asparagine 344, asparagine 468, asparagine 500, asparagine 540, asparagine 566, asparagine 610, and asparagine 620.

The protein belongs to the sulfatase family. The cofactor is Ca(2+). The conversion to 3-oxoalanine (also known as C-formylglycine, FGly), of a serine or cysteine residue in prokaryotes and of a cysteine residue in eukaryotes, is critical for catalytic activity.

The protein localises to the endoplasmic reticulum. It is found in the golgi apparatus. The protein resides in the golgi stack. Its subcellular location is the cell surface. This is Putative extracellular sulfatase Sulf-1 homolog (sul-1) from Caenorhabditis elegans.